Consider the following 883-residue polypeptide: Protein argonaute 16 (883 aa).

Residues 254-366 (PVFDFLLTNQ…VPIELCHMVS (113 aa)) form the PAZ domain. The 310-residue stretch at 535-844 (FLLCVLPERK…AAAQMGQFMK (310 aa)) folds into the Piwi domain.

The protein belongs to the argonaute family. Ago subfamily.

In terms of biological role, probably involved in the RNA silencing pathway. May bind to short RNAs such as microRNAs (miRNAs) or short interfering RNAs (siRNAs), and represses the translation of mRNAs which are complementary to them. The polypeptide is Protein argonaute 16 (AGO16) (Oryza sativa subsp. japonica (Rice)).